We begin with the raw amino-acid sequence, 179 residues long: Deoxyuridine 5'-triphosphate nucleotidohydrolase, mitochondrial (179 aa).

The N-terminal 41 residues, 1–41 (MPIEQKYFSLFSNLFKRLTTNNNNNNYLKMAPPNFETFKVK), are a transit peptide targeting the mitochondrion. DUTP contacts are provided by residues 97–99 (RSG), 111–114 (GVID), glycine 122, arginine 165, and 170–171 (FG).

The protein belongs to the dUTPase family. In terms of assembly, homotrimer. Requires Mg(2+) as cofactor.

The protein localises to the mitochondrion. It catalyses the reaction dUTP + H2O = dUMP + diphosphate + H(+). It functions in the pathway pyrimidine metabolism; dUMP biosynthesis; dUMP from dCTP (dUTP route): step 2/2. In terms of biological role, this enzyme is involved in nucleotide metabolism: it produces dUMP, the immediate precursor of thymidine nucleotides and it decreases the intracellular concentration of dUTP so that uracil cannot be incorporated into DNA. The chain is Deoxyuridine 5'-triphosphate nucleotidohydrolase, mitochondrial (dut) from Dictyostelium discoideum (Social amoeba).